A 67-amino-acid chain; its full sequence is UPF0434 protein Patl_1782 (67 aa).

It belongs to the UPF0434 family.

The sequence is that of UPF0434 protein Patl_1782 from Pseudoalteromonas atlantica (strain T6c / ATCC BAA-1087).